The primary structure comprises 288 residues: ATP synthase gamma chain (288 aa).

The protein belongs to the ATPase gamma chain family. In terms of assembly, F-type ATPases have 2 components, CF(1) - the catalytic core - and CF(0) - the membrane proton channel. CF(1) has five subunits: alpha(3), beta(3), gamma(1), delta(1), epsilon(1). CF(0) has three main subunits: a, b and c.

It is found in the cell inner membrane. Functionally, produces ATP from ADP in the presence of a proton gradient across the membrane. The gamma chain is believed to be important in regulating ATPase activity and the flow of protons through the CF(0) complex. The sequence is that of ATP synthase gamma chain from Legionella pneumophila (strain Paris).